A 919-amino-acid polypeptide reads, in one-letter code: Exostosin-like 3 (919 aa).

Residues methionine 1–threonine 30 lie on the Cytoplasmic side of the membrane. Positions methionine 1 to histidine 140 are required for interaction with REG3A. The chain crosses the membrane as a helical; Signal-anchor for type II membrane protein span at residues tryptophan 31–leucine 51. The Lumenal segment spans residues threonine 52–isoleucine 919. Cystine bridges form between cysteine 177–cysteine 182 and cysteine 188–cysteine 236. N-linked (GlcNAc...) asparagine glycosylation occurs at asparagine 290. The residue at position 362 (serine 362) is a Phosphoserine. The cysteines at positions 400 and 415 are disulfide-linked. An N-linked (GlcNAc...) asparagine glycan is attached at asparagine 592. Positions 668, 672, 697, 723, 728, 744, 745, and 746 each coordinate UDP-N-acetyl-alpha-D-glucosamine. Position 746 (aspartate 746) interacts with Mn(2+). Asparagine 790 carries N-linked (GlcNAc...) asparagine glycosylation. Cysteine 831 and cysteine 879 are joined by a disulfide. Glutamate 832, aspartate 833, and arginine 876 together coordinate UDP-N-acetyl-alpha-D-glucosamine. Aspartate 833 is an active-site residue.

It belongs to the glycosyltransferase 47 family. Homodimer; disulfide-linked. Interacts with REG3A. It depends on Mn(2+) as a cofactor. As to expression, ubiquitous. Expressed in keratinocytes. Expressed in pancreas.

It is found in the endoplasmic reticulum membrane. Its subcellular location is the golgi apparatus. The protein localises to the cell membrane. It localises to the nucleus. The enzyme catalyses 3-O-(beta-D-GlcA-(1-&gt;3)-beta-D-Gal-(1-&gt;3)-beta-D-Gal-(1-&gt;4)-beta-D-Xyl)-L-seryl-[protein] + UDP-N-acetyl-alpha-D-glucosamine = 3-O-(alpha-D-GlcNAc-(1-&gt;4)-beta-D-GlcA-(1-&gt;3)-beta-D-Gal-(1-&gt;3)-beta-D-Gal-(1-&gt;4)-beta-D-Xyl)-L-seryl-[protein] + UDP + H(+). It functions in the pathway glycan metabolism; heparan sulfate biosynthesis. In terms of biological role, glycosyltransferase which regulates the biosynthesis of heparan sulfate (HS). Initiates HS synthesis by transferring the first N-acetyl-alpha-D-glucosamine (alpha-GlcNAc) residue (GlcNAcT-I activity) to the tetrasaccharide linker (GlcA-Gal-Gal-Xyl-)Ser core linker. May also transfer alpha-GlcNAc residues during HS elongation (GlcNAcT-II activity). Lacks glucuronyl transferase II (GlcAT-II) activity. Important for both skeletal development and hematopoiesis, through the formation of HS proteoglycans (HSPGs). Through the synthesis of HS, regulates postnatal pancreatic islet maturation and insulin secretion. Functionally, receptor for REG3A, REG3B and REG3G, induces the activation of downstream signaling pathways such as PI3K-AKT or RAS-RAF-MEK-ERK signaling pathway. Required for the function of REG3A in regulating keratinocyte proliferation and differentiation. Required for the inhibition of skin inflammation mediated by REG3A through the activation of PI3K-AKT-STAT3 pathway. Required for the function of REG3A and REG3G in glucose tolerance in pancreas. Expressed in microglia, is activated by nociceptor-derived REG3G in response to endotoxins, leading to the inhibition of kynurenine pathway to prevent endotoxic death. This chain is Exostosin-like 3, found in Homo sapiens (Human).